The primary structure comprises 1440 residues: ABC transporter G family member 46 (1440 aa).

A disordered region spans residues 1 to 42 (MDDDVDAGEIYAVDRQREEGSASAAAFSRSPSTGRVDDDDDD). The span at 21–32 (SASAAAFSRSPS) shows a compositional bias: low complexity. One can recognise an ABC transporter 1 domain in the interval 137–419 (ANTLHMTTRS…FKSLGFKCLE (283 aa)). Residue 170–177 (GSPGSGKT) participates in ATP binding. The region spanning 497-710 (KILKANIDRE…ALNALAVNEF (214 aa)) is the ABC transmembrane type-2 1 domain. The next 7 membrane-spanning stretches (helical) occupy residues 516 to 536 (LYIFNALQLTLVAIIAMSVFI), 561 to 581 (AIMFKGLAEMGAALANLPVFF), 603 to 623 (TPISFLNTIIWVSITYYVIGF), 634 to 654 (FLVLFVMSEAICGLFRFIAAL), 659 to 679 (VVASTVSEFCILIVMVSSGFI), 688 to 708 (WLIWEYWTSPLMYALNALAVN), and 745 to 765 (IGLGALLGYVLLFNILYTICL). Residues 794–829 (DQEPSSGGRVTNDKRYTEGGNNDEATSSNANHNSSP) are disordered. Residues 812–829 (GGNNDEATSSNANHNSSP) show a composition bias toward polar residues. In terms of domain architecture, ABC transporter 2 spans 843–1095 (MTFEDIRYSI…ELIKYFESIE (253 aa)). 888-895 (GISGAGKT) contributes to the ATP binding site. The ABC transmembrane type-2 2 domain occupies 1168 to 1382 (IQCLACLWKQ…TINGLVTSQF (215 aa)). Transmembrane regions (helical) follow at residues 1188–1208 (IAVNFFFTVVIALLFGTMFWG), 1219–1236 (LLSAMGSMYSTCFTLGVQ), 1271–1291 (VVVELPYIFLQTLIYGVIVYS), 1302–1322 (FFWYMFFMYFTLSYFTFYGMM), 1332–1352 (MSSIVSTTFYAIWHLFSGFLI), 1357–1377 (IPIWWRWYYWICPVAWTINGL), and 1410–1430 (LWVAAMAVVSFAILFAILFGF).

It belongs to the ABC transporter superfamily. ABCG family. PDR (TC 3.A.1.205) subfamily.

Its subcellular location is the membrane. Its function is as follows. May be a general defense protein. The chain is ABC transporter G family member 46 from Oryza sativa subsp. japonica (Rice).